The primary structure comprises 366 residues: Chorismate synthase (366 aa).

Arginine 48 and arginine 54 together coordinate NADP(+). FMN-binding positions include 125 to 127 (RSS), 238 to 239 (NA), glycine 278, 293 to 297 (KPTSS), and arginine 319.

The protein belongs to the chorismate synthase family. As to quaternary structure, homotetramer. The cofactor is FMNH2.

The enzyme catalyses 5-O-(1-carboxyvinyl)-3-phosphoshikimate = chorismate + phosphate. It functions in the pathway metabolic intermediate biosynthesis; chorismate biosynthesis; chorismate from D-erythrose 4-phosphate and phosphoenolpyruvate: step 7/7. Catalyzes the anti-1,4-elimination of the C-3 phosphate and the C-6 proR hydrogen from 5-enolpyruvylshikimate-3-phosphate (EPSP) to yield chorismate, which is the branch point compound that serves as the starting substrate for the three terminal pathways of aromatic amino acid biosynthesis. This reaction introduces a second double bond into the aromatic ring system. This Neisseria meningitidis serogroup C / serotype 2a (strain ATCC 700532 / DSM 15464 / FAM18) protein is Chorismate synthase.